The chain runs to 359 residues: UPF0284 protein MTH_1426 (359 aa).

This sequence belongs to the UPF0284 family.

This Methanothermobacter thermautotrophicus (strain ATCC 29096 / DSM 1053 / JCM 10044 / NBRC 100330 / Delta H) (Methanobacterium thermoautotrophicum) protein is UPF0284 protein MTH_1426.